The following is a 157-amino-acid chain: Large ribosomal subunit protein uL22 (157 aa).

Belongs to the universal ribosomal protein uL22 family. Part of the 50S ribosomal subunit.

Functionally, this protein binds specifically to 23S rRNA. It makes multiple contacts with different domains of the 23S rRNA in the assembled 50S subunit and ribosome. The globular domain of the protein is located near the polypeptide exit tunnel on the outside of the subunit, while an extended beta-hairpin is found that lines the wall of the exit tunnel in the center of the 70S ribosome. The sequence is that of Large ribosomal subunit protein uL22 from Methanocorpusculum labreanum (strain ATCC 43576 / DSM 4855 / Z).